A 191-amino-acid polypeptide reads, in one-letter code: MANISTSEMRSGSKVMVDGDPCAIIDNEHVKPGKGQAFNRIKLRNLKTGRVWERTFKSGDTLETADVMDTDMEYLYTDGEFWHFMAVDGSFEQHAADETAVGDTIKWLKEQEKYVVTLYNGAPLAVAAPNFIELEVKETDPGVKGDTANGGSKPAFLVTGAMVRVPLFINIGEVLRVDTRTGEYVSRATGK.

At K34 the chain carries N6-(3,6-diaminohexanoyl)-5-hydroxylysine.

It belongs to the elongation factor P family. In terms of processing, may be beta-lysylated on the epsilon-amino group of Lys-34 by the combined action of EpmA and EpmB, and then hydroxylated on the C5 position of the same residue by EpmC (if this protein is present). Lysylation is critical for the stimulatory effect of EF-P on peptide-bond formation. The lysylation moiety may extend toward the peptidyltransferase center and stabilize the terminal 3-CCA end of the tRNA. Hydroxylation of the C5 position on Lys-34 may allow additional potential stabilizing hydrogen-bond interactions with the P-tRNA.

The protein resides in the cytoplasm. It participates in protein biosynthesis; polypeptide chain elongation. Its function is as follows. Involved in peptide bond synthesis. Alleviates ribosome stalling that occurs when 3 or more consecutive Pro residues or the sequence PPG is present in a protein, possibly by augmenting the peptidyl transferase activity of the ribosome. Modification of Lys-34 is required for alleviation. The protein is Elongation factor P of Marinomonas sp. (strain MWYL1).